The sequence spans 245 residues: NAD-dependent protein deacylase (245 aa).

Positions 1–237 (MNFPYRNIVV…PKLVEELLAH (237 aa)) constitute a Deacetylase sirtuin-type domain. Position 13–32 (13–32 (GAGISAESGIQTFRAQDGLW)) interacts with NAD(+). Positions 57 and 60 each coordinate substrate. 94–97 (QNID) provides a ligand contact to NAD(+). The Proton acceptor role is filled by His112. Zn(2+)-binding residues include Cys120 and Cys139. Residues 179–181 (GTS), 205–207 (NLE), and Ala223 each bind NAD(+).

The protein belongs to the sirtuin family. Class III subfamily. Zn(2+) is required as a cofactor.

The protein resides in the cytoplasm. The catalysed reaction is N(6)-acetyl-L-lysyl-[protein] + NAD(+) + H2O = 2''-O-acetyl-ADP-D-ribose + nicotinamide + L-lysyl-[protein]. It carries out the reaction N(6)-succinyl-L-lysyl-[protein] + NAD(+) + H2O = 2''-O-succinyl-ADP-D-ribose + nicotinamide + L-lysyl-[protein]. In terms of biological role, NAD-dependent lysine deacetylase and desuccinylase that specifically removes acetyl and succinyl groups on target proteins. Modulates the activities of several proteins which are inactive in their acylated form. The sequence is that of NAD-dependent protein deacylase from Vibrio vulnificus (strain CMCP6).